We begin with the raw amino-acid sequence, 531 residues long: UPF0159 protein CPn_0746/CP_1126/CPj0746/CpB0774 (531 aa).

ThyX domains lie at Lys-38–His-274 and Pro-309–Val-511.

This sequence belongs to the UPF0159 family.

The protein is UPF0159 protein CPn_0746/CP_1126/CPj0746/CpB0774 of Chlamydia pneumoniae (Chlamydophila pneumoniae).